A 428-amino-acid chain; its full sequence is Anaerobic glycerol-3-phosphate dehydrogenase subunit B (428 aa).

This sequence belongs to the anaerobic G-3-P dehydrogenase subunit B family. As to quaternary structure, composed of a catalytic GlpA/B dimer and of membrane bound GlpC. It depends on FMN as a cofactor.

The enzyme catalyses a quinone + sn-glycerol 3-phosphate = dihydroxyacetone phosphate + a quinol. Its pathway is polyol metabolism; glycerol degradation via glycerol kinase pathway; glycerone phosphate from sn-glycerol 3-phosphate (anaerobic route): step 1/1. Its function is as follows. Conversion of glycerol 3-phosphate to dihydroxyacetone. Uses fumarate or nitrate as electron acceptor. This is Anaerobic glycerol-3-phosphate dehydrogenase subunit B from Pasteurella multocida (strain Pm70).